The primary structure comprises 2798 residues: Kinesin-like protein KIN-12F (2798 aa).

A disordered region spans residues methionine 1–glycine 165. Composition is skewed to low complexity over residues valine 8–serine 22 and proline 31–glutamine 58. The Kinesin motor domain occupies asparagine 210–isoleucine 547. Glycine 291 to threonine 298 is a binding site for ATP. The span at aspartate 600 to aspartate 615 shows a compositional bias: acidic residues. The tract at residues aspartate 600–arginine 621 is disordered. Coiled coils occupy residues glutamate 792–asparagine 835, leucine 890–glutamine 987, leucine 1014–glutamate 1108, glutamine 1281–glutamate 1322, and glutamate 2130–glutamine 2333. Residues proline 2338–arginine 2359 are disordered. Coiled-coil stretches lie at residues serine 2361–aspartate 2427 and glutamate 2545–lysine 2758. The disordered stretch occupies residues arginine 2772–arginine 2798. Over residues glutamate 2774–arginine 2798 the composition is skewed to low complexity.

This sequence belongs to the TRAFAC class myosin-kinesin ATPase superfamily. Kinesin family. KIN-12 subfamily.

The chain is Kinesin-like protein KIN-12F from Oryza sativa subsp. japonica (Rice).